A 234-amino-acid chain; its full sequence is MSILHATILTVFPEMFPGTLGDSLAGQALKKNIWSYDVINIRDFGLTKHKNVDDEAYGGGDGLIMRPDVLGNAIEHALSLNPNASIYYPSPRGRVFTQSFTKEMLKNKNLIFLCGRYEGIDERVIEEYNVEEISVGDYILSGGEIPTLAILDCLIRLLPGVLMNQNTLSSESFEEDGEFKGGLECSLYTRPKIWRGRAVPSVLLSGNHKLINEWKKEQSRMITKLRRPELLKDL.

S-adenosyl-L-methionine contacts are provided by residues Gly-115 and 135–140 (VGDYIL).

Belongs to the RNA methyltransferase TrmD family. In terms of assembly, homodimer.

The protein resides in the cytoplasm. It catalyses the reaction guanosine(37) in tRNA + S-adenosyl-L-methionine = N(1)-methylguanosine(37) in tRNA + S-adenosyl-L-homocysteine + H(+). Functionally, specifically methylates guanosine-37 in various tRNAs. The sequence is that of tRNA (guanine-N(1)-)-methyltransferase from Rickettsia akari (strain Hartford).